Reading from the N-terminus, the 136-residue chain is Type II nicking enzyme V.XorIIP (136 aa).

It belongs to the Vsr family.

Its function is as follows. May nick XorII sequences that contain T/G mispairs resulting from m5C-deamination. If unrepaired, these mismatches can lead to C-to-T transition mutations. The very short patch (VSP) repair process counteracts the mutagenic process by repairing the mismatches in favor of the G-containing strand. This enzyme is an endonuclease that nicks double-stranded DNA within the sequence CGATCG (C-methylation site unknown) next to the thymidine residue that is mismatched to 2'-deoxyguanosine. The incision is mismatch-dependent and strand-specific. This chain is Type II nicking enzyme V.XorIIP, found in Xanthomonas oryzae pv. oryzae (strain KACC10331 / KXO85).